Here is a 131-residue protein sequence, read N- to C-terminus: uncharacterized protein (131 aa).

The protein resides in the plastid. It is found in the chloroplast. This is an uncharacterized protein from Chlorella vulgaris (Green alga).